A 344-amino-acid chain; its full sequence is 3-isopropylmalate dehydrogenase (344 aa).

Residues arginine 93, arginine 103, arginine 131, and aspartate 215 each contribute to the substrate site. 3 residues coordinate Mg(2+): aspartate 215, aspartate 239, and aspartate 243. An NAD(+)-binding site is contributed by 273–285 (GSAPDIAGKGIAN).

Belongs to the isocitrate and isopropylmalate dehydrogenases family. LeuB type 1 subfamily. In terms of assembly, homodimer. Mg(2+) is required as a cofactor. Mn(2+) serves as cofactor.

The protein resides in the cytoplasm. The enzyme catalyses (2R,3S)-3-isopropylmalate + NAD(+) = 4-methyl-2-oxopentanoate + CO2 + NADH. It participates in amino-acid biosynthesis; L-leucine biosynthesis; L-leucine from 3-methyl-2-oxobutanoate: step 3/4. In terms of biological role, catalyzes the oxidation of 3-carboxy-2-hydroxy-4-methylpentanoate (3-isopropylmalate) to 3-carboxy-4-methyl-2-oxopentanoate. The product decarboxylates to 4-methyl-2 oxopentanoate. The protein is 3-isopropylmalate dehydrogenase of Streptococcus mutans serotype c (strain ATCC 700610 / UA159).